A 255-amino-acid chain; its full sequence is Pimeloyl-[acyl-carrier protein] methyl ester esterase (255 aa).

Residues Trp-18, 78-79, and 139-143 each bind substrate; these read SL and FLALD. Residue Ser-78 is the Nucleophile of the active site. Active-site residues include Asp-203 and His-233. His-233 contacts substrate.

Belongs to the AB hydrolase superfamily. Carboxylesterase BioH family. As to quaternary structure, monomer.

The protein resides in the cytoplasm. The catalysed reaction is 6-carboxyhexanoyl-[ACP] methyl ester + H2O = 6-carboxyhexanoyl-[ACP] + methanol + H(+). It functions in the pathway cofactor biosynthesis; biotin biosynthesis. In terms of biological role, the physiological role of BioH is to remove the methyl group introduced by BioC when the pimeloyl moiety is complete. It allows to synthesize pimeloyl-ACP via the fatty acid synthetic pathway through the hydrolysis of the ester bonds of pimeloyl-ACP esters. In Xylella fastidiosa (strain M23), this protein is Pimeloyl-[acyl-carrier protein] methyl ester esterase.